The sequence spans 676 residues: Pentatricopeptide repeat-containing protein ATP4 homolog, chloroplastic (676 aa).

The N-terminal 73 residues, 1 to 73 (MASPSSLLSW…NSPRAAGLAR (73 aa)), are a transit peptide targeting the chloroplast. A disordered region spans residues 17–58 (LSFQPKNPSPSPATARVSVQDPPPPPSDANPSPGRSSNTSRY). PPR repeat units follow at residues 148–182 (EVILYNVALKALRKRRRWSDAEALWEEMLREGVQP), 183–217 (DNATFSTVISCARACGMPGKAVEWFEKMPDFGCSP), 218–252 (DMLTYSAVIDAYGRAGDAETALRLYDRARAEKWQL), 253–287 (DPVICATVIRVHSSSGNFDGALNVFEEMKAAGVKP), 288–322 (NLVVYNTVLDAMGRAMRPWVVKTIHRELVSQEAVP), 323–353 (NKATYCCLLHAYTRARYGEDAMAVYRVMKDE), 358–388 (DVVLYNMLLSMCADIGYVEEAEEIFRDMKAS), 396–430 (DSWSYSSMVTLYSCTGNVAGAEGILNEMVEAGFKP), 431–465 (NIFILTSLIRCYGKAGRTDDVVRSFAMLEDLGITP), and 532–566 (RMPYCNCLMDLAVNLSQMEKACALLDVALRLGIYS). The Smr domain maps to 578–662 (LHLRGLSVGA…WFLTTSVAAR (85 aa)).

The protein belongs to the PPR family. P subfamily.

The protein localises to the plastid. Its subcellular location is the chloroplast. Involved in translation and accumulation of chloroplast ATP synthase subunits. The sequence is that of Pentatricopeptide repeat-containing protein ATP4 homolog, chloroplastic from Oryza sativa subsp. japonica (Rice).